The chain runs to 173 residues: uncharacterized protein (173 aa).

The region spanning 2–171 is the N-acetyltransferase domain; the sequence is VTVREAKLED…PDLSALKTLL (170 aa).

This sequence belongs to the acetyltransferase family.

This is an uncharacterized protein from Bacillus subtilis (strain 168).